An 833-amino-acid polypeptide reads, in one-letter code: RNA-binding protein 5-A (833 aa).

The disordered stretch occupies residues 1–87 (MGSDKRVSRS…GYHSDGDYMD (87 aa)). Positions 102 to 182 (KTIMLRGLPI…KTIAMHYSNP (81 aa)) constitute an RRM 1 domain. The RanBP2-type zinc-finger motif lies at 185-214 (KFEDWLCNKCGLYNFRRRLKCFRCGAAKAE). An RRM 2 domain is found at 241 to 325 (SAIILRNIGP…KTIGVDFAKS (85 aa)). The span at 396–428 (TGAAEQGTAPQAESSSPVPATTSAVVCQSPQMY) shows a compositional bias: polar residues. Disordered stretches follow at residues 396 to 458 (TGAA…EEAA) and 523 to 559 (AADG…TAQQ). Residues 429–458 (QQPGSPTQSSTSTVAASATPASGTSAEEAA) show a composition bias toward low complexity. The segment at 667–692 (LACLLCRRQFPNKDALTRHQQLSDLH) adopts a C2H2-type zinc-finger fold. The 47-residue stretch at 761-807 (NSNIGNKMLQAMGWKEGSGLGRKSQGITAPIQAQVRMRGAGLGAKGS) folds into the G-patch domain.

This sequence belongs to the RBM5/RBM10 family. As to quaternary structure, component of the spliceosome A complex (also known as the prespliceosome). Appears to dissociate from the spliceosome upon formation of the spliceosome B complex (also known as the precatalytic spliceosome), in which the heterotrimeric U4/U6.U5 snRNPs are bound.

It is found in the nucleus. In terms of biological role, component of the spliceosome A complex. Regulates alternative splicing of a number of mRNAs. May modulate splice site pairing after recruitment of the U1 and U2 snRNPs to the 5' and 3' splice sites of the intron. This Xenopus laevis (African clawed frog) protein is RNA-binding protein 5-A (rbm5-a).